A 539-amino-acid chain; its full sequence is Nucleoporin NUP60 (539 aa).

4 positions are modified to phosphoserine: S10, S49, S81, and S89. The disordered stretch occupies residues 44-80 (DSARVSPRNNVANKQPRNESFNRRISSMPGGYFHSEI). Positions 91-118 (VVSAVGEARNDIENKEEEYDETHETNIS) form a coiled coil. Phosphoserine occurs at positions 162, 171, 214, and 222. Composition is skewed to polar residues over residues 242–252 (TANTSAQSIAS) and 258–267 (SGVSKSAPSK). 3 disordered regions span residues 242-267 (TANT…APSK), 305-329 (IRKH…TTVK), and 347-493 (NATK…GKHI). The segment covering 347–359 (NATKISPSAPSKD) has biased composition (polar residues). S352, S360, S374, and S382 each carry phosphoserine. 2 stretches are compositionally biased toward polar residues: residues 395 to 433 (SAFN…TNLQ) and 448 to 485 (GDST…LSQE). FXF repeat units follow at residues 399–401 (FSF) and 427–429 (FNF). Position 460 is a phosphothreonine (T460). The FXF 3 repeat unit spans residues 469–471 (FVF). 2 positions are modified to phosphoserine: S480 and S483. Residues 509-511 (FDF) form an FXF 4 repeat.

Component of the nuclear pore complex (NPC). NPC constitutes the exclusive means of nucleocytoplasmic transport. NPCs allow the passive diffusion of ions and small molecules and the active, nuclear transport receptor-mediated bidirectional transport of macromolecules such as proteins, RNAs, ribonucleoparticles (RNPs), and ribosomal subunits across the nuclear envelope. Due to its 8-fold rotational symmetry, all subunits are present with 8 copies or multiples thereof. Binds to NUP1 and NUP2 forming the nuclear basket and the distal ring. The interaction with NUP2 is GSP1-GTP-dependent. Interacts through its FG repeats with karyopherins, such as KAP123 and KAP95-SRP1 (KAP60). Also interacts with GSP1-GTP and SRM1 (PRP20), where NUP60 reduces SRM1 activity, thus inhibiting GSP1 guanine nucleotide dissociation. Phosphorylated by CDC28.

Its subcellular location is the nucleus. It localises to the nuclear pore complex. The protein localises to the nucleus membrane. Functions as a component of the nuclear pore complex (NPC). NPC components, collectively referred to as nucleoporins (NUPs), can play the role of both NPC structural components and of docking or interaction partners for transiently associated nuclear transport factors. Active directional transport is assured by both, a Phe-Gly (FG) repeat affinity gradient for these transport factors across the NPC and a transport cofactor concentration gradient across the nuclear envelope (GSP1 and GSP2 GTPases associated predominantly with GTP in the nucleus, with GDP in the cytoplasm). In Saccharomyces cerevisiae (strain ATCC 204508 / S288c) (Baker's yeast), this protein is Nucleoporin NUP60 (NUP60).